Consider the following 184-residue polypeptide: Photosystem I assembly protein Ycf4 (184 aa).

2 consecutive transmembrane segments (helical) span residues 19–39 (ISNF…LLVG) and 57–77 (IIFF…LFIS).

This sequence belongs to the Ycf4 family.

It localises to the plastid. The protein localises to the chloroplast thylakoid membrane. Functionally, seems to be required for the assembly of the photosystem I complex. The sequence is that of Photosystem I assembly protein Ycf4 from Cucumis sativus (Cucumber).